The chain runs to 243 residues: Vesicle-associated membrane protein-associated protein B (243 aa).

Position 2 is an N-acetylalanine (Ala2). Residues 2–218 (AKVEQVLSLE…AALAASGKEE (217 aa)) lie on the Cytoplasmic side of the membrane. In terms of domain architecture, MSP spans 7–124 (VLSLEPQHEL…MDSKLRCVFE (118 aa)). At Ser146 the chain carries Phosphoserine. Lys147 participates in a covalent cross-link: Glycyl lysine isopeptide (Lys-Gly) (interchain with G-Cter in SUMO1). At Ser159 the chain carries Phosphoserine. Residues 161 to 196 (LDDAEVKKVMEECRRLQGEVQRLREESRQLKEEDGL) are a coiled coil. Residue Ser206 is modified to Phosphoserine. The chain crosses the membrane as a helical; Anchor for type IV membrane protein span at residues 219–239 (GLSARLLALVVLFFIVGVIIG).

The protein belongs to the VAMP-associated protein (VAP) (TC 9.B.17) family. As to quaternary structure, homodimer, and heterodimer with VAPA. Interacts with VAMP1 and VAMP2. Interacts (via MSP domain) with ZFYVE27. Interacts with RMDN3. Interacts with KIF5A in a ZFYVE27-dependent manner. Interacts (via MSP domain) with STARD3 (via phospho-FFAT motif). Interacts with STARD3NL (via FFAT motif). Interacts with CERT1. Interacts with PLEKHA3 and SACM1L to form a ternary complex. Interacts with VPS13A (via FFAT motif). Interacts with RB1CC1 (via phosphorylated FFAT motif), MIGA2 (via phosphorylated FFAT motif), RMDN3 (via phosphorylated FFAT motif), OSBPL1A (via FFAT motif), KCNB1 (via phosphorylated FFAT motif) and KCNB2 (via phosphorylated FFAT motif). Interacts (via MSP domain) with WDR44; the interactions connect the endoplasmic reticulum (ER) with the endosomal tubule. In terms of tissue distribution, ubiquitous.

It localises to the endoplasmic reticulum membrane. In terms of biological role, endoplasmic reticulum (ER)-anchored protein that mediates the formation of contact sites between the ER and endosomes via interaction with FFAT motif-containing proteins such as STARD3 or WDR44. Interacts with STARD3 in a FFAT motif phosphorylation dependent manner. Via interaction with WDR44 participates in neosynthesized protein export. Participates in the endoplasmic reticulum unfolded protein response (UPR) by inducing ERN1/IRE1 activity. Involved in cellular calcium homeostasis regulation. This chain is Vesicle-associated membrane protein-associated protein B, found in Rattus norvegicus (Rat).